Here is a 71-residue protein sequence, read N- to C-terminus: Cytochrome c oxidase subunit 7, mitochondrial (71 aa).

Topologically, residues 1-35 (MPGLVNAPNHVPEKQRYYQQAFKNHTRLWKIGPRS) are mitochondrial matrix. Residues 36 to 58 (GIIMTTFNIAMWGTFGASMYAMS) traverse the membrane as a helical segment. The Mitochondrial intermembrane portion of the chain corresponds to 59 to 71 (RKVLGYNTWFSED).

This sequence belongs to the cytochrome c oxidase VIIa family. In terms of assembly, component of the cytochrome c oxidase (complex IV, CIV), a multisubunit enzyme composed of 11 subunits. The complex is composed of a catalytic core of 3 subunits Cox1, Cox2 and Cox3, encoded in the mitochondrial DNA, and 8 supernumerary subunits Cox4, Cox5a/Cox5, Cox6, Cox7, Cox8, Cox7a/Cox9, Cox6b/Cox12 and Cox6a/Cox13, which are encoded in the nuclear genome. The complex exists as a monomer or a dimer and forms respiratory supercomplexes (SCs) in the inner mitochondrial membrane with NADH-ubiquinone oxidoreductase (complex I, CI) and ubiquinol-cytochrome c oxidoreductase (cytochrome b-c1 complex, complex III, CIII), resulting in various different assemblies (supercomplexes I(1)IV(1), I(1)III(3)IV(2), III(2)IV(1) and III(2)IV(2) as well as larger supercomplexes of compositions like I(1)III(2)IV(5-6)).

It localises to the mitochondrion inner membrane. The protein operates within energy metabolism; oxidative phosphorylation. Component of the cytochrome c oxidase, the last enzyme in the mitochondrial electron transport chain which drives oxidative phosphorylation. The respiratory chain contains 3 multisubunit complexes succinate dehydrogenase (complex II, CII), ubiquinol-cytochrome c oxidoreductase (cytochrome b-c1 complex, complex III, CIII) and cytochrome c oxidase (complex IV, CIV), that cooperate to transfer electrons derived from NADH and succinate to molecular oxygen, creating an electrochemical gradient over the inner membrane that drives transmembrane transport and the ATP synthase. Cytochrome c oxidase is the component of the respiratory chain that catalyzes the reduction of oxygen to water. Electrons originating from reduced cytochrome c in the intermembrane space (IMS) are transferred via the dinuclear copper A center (CU(A)) of Cox2 and heme A of Cox1 to the active site in Cox1, a binuclear center (BNC) formed by heme A3 and copper B (CU(B)). The BNC reduces molecular oxygen to 2 water molecules using 4 electrons from cytochrome c in the IMS and 4 protons from the mitochondrial matrix. This chain is Cytochrome c oxidase subunit 7, mitochondrial, found in Neurospora crassa (strain ATCC 24698 / 74-OR23-1A / CBS 708.71 / DSM 1257 / FGSC 987).